Here is a 335-residue protein sequence, read N- to C-terminus: MQPFYKRHFLRLMDFTPAEIAHLLALSTKLKADKKNGIETRRLQGKNIALIFEKDSTRTRCSFEVAAYDQGAQVTYLGPSGSQIGHKESIKDTARVLGRMYDGIQYRGYGQQIVETLAQYAGVPVWNGLTNEFHPTQLLADLLTMQEYLPGKALSDMTLVYVGDARNNMGNTMLEAAALTGLDLRLVAPKACWPDAGLVAECQAAAKQTGGSITLTEDIAAGVAGADFIYTDVWVSMGEPKETWKERIALLKPYQVNMAMIAATGNPQVKFLHCLPAFHDDQTTMGQQMAEQYGLHGGMEVTDEVFESAHSIVFDQAENRMHTIKAVMVATLAQD.

Residues 56–59 (STRT), Gln-83, Arg-107, and 134–137 (HPTQ) contribute to the carbamoyl phosphate site. L-ornithine contacts are provided by residues Asn-168, Asp-232, and 236-237 (SM). Carbamoyl phosphate contacts are provided by residues 274–275 (CL) and Arg-320.

Belongs to the aspartate/ornithine carbamoyltransferase superfamily. OTCase family.

Its subcellular location is the cytoplasm. The catalysed reaction is carbamoyl phosphate + L-ornithine = L-citrulline + phosphate + H(+). Its pathway is amino-acid biosynthesis; L-arginine biosynthesis; L-arginine from L-ornithine and carbamoyl phosphate: step 1/3. Its function is as follows. Reversibly catalyzes the transfer of the carbamoyl group from carbamoyl phosphate (CP) to the N(epsilon) atom of ornithine (ORN) to produce L-citrulline. This chain is Ornithine carbamoyltransferase, found in Pectobacterium atrosepticum (strain SCRI 1043 / ATCC BAA-672) (Erwinia carotovora subsp. atroseptica).